The primary structure comprises 361 residues: Glucose 1-dehydrogenase (361 aa).

C41 lines the Zn(2+) pocket. T43 contributes to the substrate binding site. Residues H68 and E69 each coordinate Zn(2+). Residues E119, E156, and N160 each contribute to the substrate site. Position 156 (E156) interacts with Zn(2+). NADP(+) contacts are provided by residues 216-218, 275-277, 304-306, and K349; these read NRH, FGT, and SVD. D306 is a binding site for substrate.

It belongs to the zinc-containing alcohol dehydrogenase family. Glucose 1-dehydrogenase subfamily. In terms of assembly, homotetramer. It depends on Zn(2+) as a cofactor.

It carries out the reaction D-glucose + NAD(+) = D-glucono-1,5-lactone + NADH + H(+). The catalysed reaction is D-glucose + NADP(+) = D-glucono-1,5-lactone + NADPH + H(+). The enzyme catalyses D-galactose + NAD(+) = D-galactono-1,4-lactone + NADH + H(+). It catalyses the reaction D-galactose + NADP(+) = D-galactono-1,5-lactone + NADPH + H(+). In terms of biological role, catalyzes the NAD(P)(+)-dependent oxidation of D-glucose to D-gluconate via gluconolactone. Is also significantly active with galactose as substrate, but not with mannose or glucose 6-phosphate. Can utilize both NAD(+) and NADP(+) as electron acceptor, with a marked preference for NADP(+). Physiologically, may be involved in the degradation of both glucose and galactose through a non-phosphorylative variant of the Entner-Doudoroff pathway. The polypeptide is Glucose 1-dehydrogenase (Thermoplasma acidophilum (strain ATCC 25905 / DSM 1728 / JCM 9062 / NBRC 15155 / AMRC-C165)).